The primary structure comprises 200 residues: Transgelin (200 aa).

Position 2 is an N-acetylalanine (A2). A Calponin-homology (CH) domain is found at 24–137; sequence DELEDRLVEW…RTLVALGSLA (114 aa). The Calponin-like repeat unit spans residues 175–199; sequence IGLQMGTNKGASQAGMSYGRPRQII.

The protein belongs to the calponin family. As to quaternary structure, monomer. Gizzard, uterus, intestine, esophagus, aorta, and trace amounts in brain, liver and heart.

The protein resides in the cytoplasm. Actin cross-linking/gelling protein. The protein is Transgelin (TAGLN) of Gallus gallus (Chicken).